Reading from the N-terminus, the 510-residue chain is Protein phosphatase EYA3 (510 aa).

2 disordered regions span residues 1–32 (MQEP…SNLS) and 175–233 (YQTE…DASS). Polar residues predominate over residues 7 to 16 (QTLSQVNNPD). A compositionally biased stretch (low complexity) spans 192 to 203 (LPSDSSASPPLS). A phosphoserine mark is found at S199 and S203. The active-site Nucleophile is the D246. Mg(2+)-binding residues include D246 and D248. Residue D248 is the Proton donor of the active site. S375 and S409 each carry phosphoserine. D474 lines the Mg(2+) pocket.

This sequence belongs to the HAD-like hydrolase superfamily. EYA family. Interacts with SIX1 and DACH1, and probably SIX2, SIX4 and SIX5. Mg(2+) is required as a cofactor. In terms of processing, ser-203 phosphorylation is required for localization at sites of DNA damage and directing interaction with H2AX. As to expression, expressed in branchial arches, CNS and developing eye.

Its subcellular location is the cytoplasm. It is found in the nucleus. It carries out the reaction O-phospho-L-tyrosyl-[protein] + H2O = L-tyrosyl-[protein] + phosphate. Tyrosine phosphatase that specifically dephosphorylates 'Tyr-142' of histone H2AX (H2AXY142ph). 'Tyr-142' phosphorylation of histone H2AX plays a central role in DNA repair and acts as a mark that distinguishes between apoptotic and repair responses to genotoxic stress. Promotes efficient DNA repair by dephosphorylating H2AX, promoting the recruitment of DNA repair complexes containing MDC1. Its function as histone phosphatase probably explains its role in transcription regulation during organogenesis. The phosphatase activity has been shown in vitro. Coactivates SIX1. Seems to coactivate SIX2, SIX4 and SIX5. The repression of precursor cell proliferation in myoblasts by SIX1 is switched to activation through recruitment of EYA3 to the SIX1-DACH1 complex and seems to be dependent on EYA3 phosphatase activity. May be involved in development of the eye. May play a role in mediating the induction and differentiation of cranial placodes. The polypeptide is Protein phosphatase EYA3 (Eya3) (Mus musculus (Mouse)).